We begin with the raw amino-acid sequence, 465 residues long: Cysteine--tRNA ligase (465 aa).

Cysteine 30 contributes to the Zn(2+) binding site. The short motif at 32–42 (ITVYDYCHVGH) is the 'HIGH' region element. Zn(2+)-binding residues include cysteine 214, histidine 239, and glutamate 243. A 'KMSKS' region motif is present at residues 271–275 (KMSKS). Lysine 274 serves as a coordination point for ATP.

It belongs to the class-I aminoacyl-tRNA synthetase family. Monomer. The cofactor is Zn(2+).

The protein localises to the cytoplasm. It catalyses the reaction tRNA(Cys) + L-cysteine + ATP = L-cysteinyl-tRNA(Cys) + AMP + diphosphate. This Burkholderia cenocepacia (strain HI2424) protein is Cysteine--tRNA ligase.